Consider the following 208-residue polypeptide: Protein-L-isoaspartate O-methyltransferase (208 aa).

The active site involves S59.

This sequence belongs to the methyltransferase superfamily. L-isoaspartyl/D-aspartyl protein methyltransferase family.

The protein resides in the cytoplasm. It catalyses the reaction [protein]-L-isoaspartate + S-adenosyl-L-methionine = [protein]-L-isoaspartate alpha-methyl ester + S-adenosyl-L-homocysteine. Catalyzes the methyl esterification of L-isoaspartyl residues in peptides and proteins that result from spontaneous decomposition of normal L-aspartyl and L-asparaginyl residues. It plays a role in the repair and/or degradation of damaged proteins. In Pectobacterium carotovorum subsp. carotovorum (strain PC1), this protein is Protein-L-isoaspartate O-methyltransferase.